The sequence spans 175 residues: Clathrin-associated protein AP-3 complex component APS3 (175 aa).

This sequence belongs to the adaptor complexes small subunit family. As to quaternary structure, adaptor protein complex 3 (AP-3) is a heterotetramer composed of 2 large adaptins, a medium adaptin and a small adaptin.

It is found in the golgi apparatus. The protein resides in the cytoplasmic vesicle membrane. Its function is as follows. Part of the AP-3 complex, an adapter-related complex which is not clathrin-associated. The complex is associated with the Golgi region as well as more peripheral structures. It facilitates the budding of vesicles from the Golgi membrane. Involved in vacuolar trafficking and contributes to hyphal growth and pathogenesis. This is Clathrin-associated protein AP-3 complex component APS3 (APS3) from Candida albicans (strain SC5314 / ATCC MYA-2876) (Yeast).